A 517-amino-acid polypeptide reads, in one-letter code: TBC1 domain family member 22A (517 aa).

The residue at position 2 (A2) is an N-acetylalanine. Positions 103–191 (RNHSQRQGRP…PSTLSSSALS (89 aa)) are disordered. Residues S132, S145, and S167 each carry the phosphoserine modification. A compositionally biased stretch (polar residues) spans 163-174 (QRSQSLPHSATV). Residues 176–190 (LGGTSDPSTLSSSAL) show a composition bias toward low complexity. A Rab-GAP TBC domain is found at 222–446 (GIPKPVRPMT…RLWDTYQSEP (225 aa)).

As to quaternary structure, homodimer. Interacts with ACBD3 and ARFGEF1. Interacts with YWHAB, YWHAE, YWHAG, YWHAH, YWHAQ and YWHAZ.

May act as a GTPase-activating protein for Rab family protein(s). This is TBC1 domain family member 22A (TBC1D22A) from Homo sapiens (Human).